The following is a 262-amino-acid chain: Zinc-finger homeodomain protein 6 (262 aa).

Basic and acidic residues-rich tracts occupy residues 1–25 (MEVR…DHHR) and 36–47 (NKEKPTTKRNGS). The tract at residues 1–93 (MEVREKKDEK…ECQKNHAASS (93 aa)) is disordered. The ZF-HD dimerization-type; degenerate zinc finger occupies 82–131 (YRECQKNHAASSGGHVVDGCGEFMSSGEEGTVESLLCAACDCHRSFHRKE). A DNA-binding region (homeobox) is located at residues 198-261 (KKRFRTKFNE…NNKQAAKKKD (64 aa)).

As to quaternary structure, homo- and heterodimer with other ZFHD proteins. Interacts with MIF1 and MIF3; these interactions prevent nuclear localization and DNA-binding to inhibit transcription regulation activity. Binds to ZHD1, ZHD2, ZHD10 and ZHD11. In terms of tissue distribution, expressed in seedlings, roots, leaves, stems, flowers and inflorescence.

It localises to the nucleus. Functionally, putative transcription factor. The chain is Zinc-finger homeodomain protein 6 (ZHD6) from Arabidopsis thaliana (Mouse-ear cress).